The primary structure comprises 348 residues: Peroxidase 40 (348 aa).

A signal peptide spans 1–21 (MKNLFNLFLMFFFAMPILSLS). A glycan (N-linked (GlcNAc...) asparagine) is linked at Asn-26. 4 disulfides stabilise this stretch: Cys-59–Cys-139, Cys-92–Cys-97, Cys-145–Cys-344, and Cys-224–Cys-256. Residue His-90 is the Proton acceptor of the active site. Ca(2+) is bound by residues Asp-91, Val-94, Gly-96, Asp-98, and Ser-100. Residues 170–189 (GRKDSRTASKQAATNGLPSP) are disordered. Polar residues predominate over residues 177-189 (ASKQAATNGLPSP). Pro-187 serves as a coordination point for substrate. N-linked (GlcNAc...) asparagine glycosylation occurs at Asn-190. His-217 is a binding site for heme b. A Ca(2+)-binding site is contributed by Thr-218. Ca(2+)-binding residues include Asp-269, Thr-272, and Asp-277.

Belongs to the peroxidase family. Classical plant (class III) peroxidase subfamily. The cofactor is heme b. Requires Ca(2+) as cofactor.

It is found in the secreted. It catalyses the reaction 2 a phenolic donor + H2O2 = 2 a phenolic radical donor + 2 H2O. Removal of H(2)O(2), oxidation of toxic reductants, biosynthesis and degradation of lignin, suberization, auxin catabolism, response to environmental stresses such as wounding, pathogen attack and oxidative stress. These functions might be dependent on each isozyme/isoform in each plant tissue. This is Peroxidase 40 (PER40) from Arabidopsis thaliana (Mouse-ear cress).